The following is a 502-amino-acid chain: Glycerol kinase (502 aa).

ADP is bound at residue Thr14. 3 residues coordinate ATP: Thr14, Thr15, and Ser16. Thr14 provides a ligand contact to sn-glycerol 3-phosphate. Residue Arg18 participates in ADP binding. Sn-glycerol 3-phosphate contacts are provided by Arg84, Glu85, Tyr136, and Asp246. Positions 84, 85, 136, 246, and 247 each coordinate glycerol. Thr268 and Gly311 together coordinate ADP. ATP is bound by residues Thr268, Gly311, Gln315, and Gly412. Positions 412 and 416 each coordinate ADP.

The protein belongs to the FGGY kinase family. In terms of assembly, homotetramer and homodimer (in equilibrium). Heterodimer with EIIA-Glc. Binds 1 zinc ion per glycerol kinase EIIA-Glc dimer. The zinc ion is important for dimerization.

The enzyme catalyses glycerol + ATP = sn-glycerol 3-phosphate + ADP + H(+). It participates in polyol metabolism; glycerol degradation via glycerol kinase pathway; sn-glycerol 3-phosphate from glycerol: step 1/1. Activity of this regulatory enzyme is affected by several metabolites. Allosterically and non-competitively inhibited by fructose 1,6-bisphosphate (FBP) and unphosphorylated phosphocarrier protein EIIA-Glc (III-Glc), an integral component of the bacterial phosphotransferase (PTS) system. Its function is as follows. Key enzyme in the regulation of glycerol uptake and metabolism. Catalyzes the phosphorylation of glycerol to yield sn-glycerol 3-phosphate. In Salmonella agona (strain SL483), this protein is Glycerol kinase.